A 578-amino-acid chain; its full sequence is Ribonuclease SLFN12 (578 aa).

Phosphoserine is present on Ser368. Residues 551-560 are mediates interaction with PDE3A; the sequence is AENLYQIIGI. Position 573 is a phosphoserine (Ser573).

This sequence belongs to the Schlafen family. Subgroup II subfamily. In terms of assembly, homodimer. Interacts with PDE3A; direct low affinity interaction which is stimulated by binding of 17beta-estradiol/E2 to PDE3A and that positively regulates the ribonuclease activity of SLFN12. Interacts with SERPINB12; as part of a pathway regulating cell differentiation. Post-translationally, phosphorylation at Ser-368 and Ser-573 negatively regulates the ribonuclease activity. Dephosphorylation is induced by the interaction with PDE3A and stimulates the rRNA ribonuclease activity.

Its subcellular location is the nucleus. It is found in the cytoplasm. It localises to the cytosol. Its function is as follows. Ribonuclease which is part of an E2/17beta-estradiol-induced pro-apoptotic signaling pathway. E2 stabilizes the PDE3A/SLFN12 complex in the cytosol, promoting the dephosphorylation of SLFN12 and activating its pro-apoptotic ribosomal RNA/rRNA ribonuclease activity. This apoptotic pathway might be relevant in tissues with high concentration of E2 and be for instance involved in placenta remodeling. May play a role in cell differentiation. The sequence is that of Ribonuclease SLFN12 from Homo sapiens (Human).